We begin with the raw amino-acid sequence, 440 residues long: 3-phosphoshikimate 1-carboxyvinyltransferase (440 aa).

3 residues coordinate 3-phosphoshikimate: lysine 26, serine 27, and arginine 31. Lysine 26 contributes to the phosphoenolpyruvate binding site. Glycine 99 and arginine 127 together coordinate phosphoenolpyruvate. Residues serine 172, glutamine 174, aspartate 320, and lysine 347 each contribute to the 3-phosphoshikimate site. A phosphoenolpyruvate-binding site is contributed by glutamine 174. The Proton acceptor role is filled by aspartate 320. Residues arginine 351 and arginine 392 each contribute to the phosphoenolpyruvate site.

The protein belongs to the EPSP synthase family. As to quaternary structure, monomer.

Its subcellular location is the cytoplasm. It catalyses the reaction 3-phosphoshikimate + phosphoenolpyruvate = 5-O-(1-carboxyvinyl)-3-phosphoshikimate + phosphate. It functions in the pathway metabolic intermediate biosynthesis; chorismate biosynthesis; chorismate from D-erythrose 4-phosphate and phosphoenolpyruvate: step 6/7. Its function is as follows. Catalyzes the transfer of the enolpyruvyl moiety of phosphoenolpyruvate (PEP) to the 5-hydroxyl of shikimate-3-phosphate (S3P) to produce enolpyruvyl shikimate-3-phosphate and inorganic phosphate. The protein is 3-phosphoshikimate 1-carboxyvinyltransferase of Xanthomonas oryzae pv. oryzae (strain MAFF 311018).